The sequence spans 292 residues: Glycine--tRNA ligase alpha subunit (292 aa).

Belongs to the class-II aminoacyl-tRNA synthetase family. Tetramer of two alpha and two beta subunits.

The protein resides in the cytoplasm. It carries out the reaction tRNA(Gly) + glycine + ATP = glycyl-tRNA(Gly) + AMP + diphosphate. The polypeptide is Glycine--tRNA ligase alpha subunit (Syntrophus aciditrophicus (strain SB)).